Consider the following 214-residue polypeptide: Cytochrome b (214 aa).

Helical transmembrane passes span 31-51, 75-96, 111-131, and 176-196; these read FGSMLLICLMLQTLTGFFLAI, WTMQNLHAISASLFFICIYIHI, WLSGVTLLFTLMATAFFGYVL, and FFALHFILPFIIISLSSAHIM. Residues His-81 and His-95 each coordinate heme b. Heme b is bound by residues His-180 and His-194. Position 199 (His-199) interacts with a ubiquinone.

Belongs to the cytochrome b family. As to quaternary structure, the cytochrome bc1 complex contains 3 respiratory subunits (MT-CYB, CYC1 and UQCRFS1), 2 core proteins (UQCRC1 and UQCRC2) and probably 6 low-molecular weight proteins. The cofactor is heme b.

The protein localises to the mitochondrion inner membrane. In terms of biological role, component of the ubiquinol-cytochrome c reductase complex (complex III or cytochrome b-c1 complex) that is part of the mitochondrial respiratory chain. The b-c1 complex mediates electron transfer from ubiquinol to cytochrome c. Contributes to the generation of a proton gradient across the mitochondrial membrane that is then used for ATP synthesis. In Elapsoidea semiannulata (Angolan garter snake), this protein is Cytochrome b (MT-CYB).